The following is a 372-amino-acid chain: Aminomethyltransferase (372 aa).

Belongs to the GcvT family. The glycine cleavage system is composed of four proteins: P, T, L and H.

It carries out the reaction N(6)-[(R)-S(8)-aminomethyldihydrolipoyl]-L-lysyl-[protein] + (6S)-5,6,7,8-tetrahydrofolate = N(6)-[(R)-dihydrolipoyl]-L-lysyl-[protein] + (6R)-5,10-methylene-5,6,7,8-tetrahydrofolate + NH4(+). Functionally, the glycine cleavage system catalyzes the degradation of glycine. The polypeptide is Aminomethyltransferase (Paraburkholderia phymatum (strain DSM 17167 / CIP 108236 / LMG 21445 / STM815) (Burkholderia phymatum)).